The primary structure comprises 619 residues: Zinc finger CCCH domain-containing protein 67 (619 aa).

2 ANK repeats span residues 52 to 81 and 88 to 120; these read EPLTPLMVAAVYGSVGCLDALLSPPYLVDP and SLSTPLHLAAAGGSASAPAAVSRLLAAGADPAL. 2 C3H1-type zinc fingers span residues 213-241 and 249-273; these read HYSCVPCPEFKKGAGCRRGDMCEYAHGVF and QYRTRLCKDGVGCARRVCFFAHTPD. Positions 308 to 341 are disordered; it reads SPGSSSFTPPLSPSAGGGGGGGGGSGGGGAWPQQ. Over residues 322–337 the composition is skewed to gly residues; that stretch reads AGGGGGGGGGSGGGGA.

The polypeptide is Zinc finger CCCH domain-containing protein 67 (Oryza sativa subsp. japonica (Rice)).